The primary structure comprises 485 residues: Tektin-5 (485 aa).

Coiled coils occupy residues 114–185, 225–247, 307–385, and 421–444; these read RLTD…EVNC, QEQMRKLAQRIDIQMRDNRDAQH, QNMR…MAKE, and TIDDTLQTLKLRLRETQDTLQLLV.

This sequence belongs to the tektin family. In terms of assembly, microtubule inner protein component of sperm flagellar doublet microtubules. Interacts with TEKT3. In terms of processing, ubiquitinated, leading to its degradation. Deubiquitinated by USP16, promoting its stability.

The protein localises to the cytoplasm. It localises to the cytoskeleton. The protein resides in the flagellum axoneme. In terms of biological role, sperm-specific microtubule inner protein (MIP) part of the dynein-decorated doublet microtubules (DMTs) in flagellar axoneme. Forms an extensive interaction network in different conformations that reinforces the helix bundle composed by other tektin proteins (TEKT1 to TEKT4) and MIPs to anchor the tektin bundle onto the tubulin wall of A-tubule of the sperm flagellum. This is Tektin-5 (TEKT5) from Homo sapiens (Human).